The sequence spans 234 residues: KAQEPWFGIEQEYTLLNSVTKWPLGWPKGGYPAGQGPYYCSVGAGRSIGRDIPEVHYRCCLHAGIQISGVNGEVLPSQWEYQVGPVEGIAMGDQMWMSRYLMYRVAELFNVEVTFDPKPIPGDWNGSGGHVNFSNRQPESPPAGKQSRSSAKKLGKRHRWHIAAYGEGNERRLTGKHETSSMNDFSWGVANRGCSIRVGRMVPVEKCGYYEDRRPSSNLDPYVVTRLLVETTLL.

The GS catalytic domain occupies 1–234 (KAQEPWFGIE…TRLLVETTLL (234 aa)). The tract at residues 126-157 (GSGGHVNFSNRQPESPPAGKQSRSSAKKLGKR) is disordered.

It belongs to the glutamine synthetase family. As to quaternary structure, homooctamer.

The protein resides in the cytoplasm. It catalyses the reaction L-glutamate + NH4(+) + ATP = L-glutamine + ADP + phosphate + H(+). This is Glutamine synthetase from Dunaliella salina (Green alga).